The primary structure comprises 142 residues: MKTQVAKKEEVTRDWYLVDVDNKVLGRVATEIANVLRGKNKPTFTPSVDTGDFVIVVNAEKIALTGRKLADKVYYSHSSYPGGLKEITAGKLLDKKPEELLKKAVKGMLPKNKLARHMLKKLKIYSGGAHPHAAQNPKNLNI.

This sequence belongs to the universal ribosomal protein uL13 family. Part of the 50S ribosomal subunit.

Functionally, this protein is one of the early assembly proteins of the 50S ribosomal subunit, although it is not seen to bind rRNA by itself. It is important during the early stages of 50S assembly. This Geobacter sp. (strain M21) protein is Large ribosomal subunit protein uL13.